The following is a 333-amino-acid chain: Transaldolase (333 aa).

Lys-135 functions as the Schiff-base intermediate with substrate in the catalytic mechanism.

Belongs to the transaldolase family. Type 1 subfamily. Homodimer.

The protein resides in the cytoplasm. The enzyme catalyses D-sedoheptulose 7-phosphate + D-glyceraldehyde 3-phosphate = D-erythrose 4-phosphate + beta-D-fructose 6-phosphate. The protein operates within carbohydrate degradation; pentose phosphate pathway; D-glyceraldehyde 3-phosphate and beta-D-fructose 6-phosphate from D-ribose 5-phosphate and D-xylulose 5-phosphate (non-oxidative stage): step 2/3. Functionally, transaldolase is important for the balance of metabolites in the pentose-phosphate pathway. The chain is Transaldolase from Prochlorococcus marinus (strain MIT 9312).